The primary structure comprises 208 residues: Octanoyltransferase (208 aa).

Residues 31-208 (GSEREMVWLL…LKKEFYKVFA (178 aa)) enclose the BPL/LPL catalytic domain. Substrate-binding positions include 70–77 (RGGKYSYH), 142–144 (AFG), and 155–157 (GVA). C173 serves as the catalytic Acyl-thioester intermediate.

Belongs to the LipB family.

The protein resides in the cytoplasm. It carries out the reaction octanoyl-[ACP] + L-lysyl-[protein] = N(6)-octanoyl-L-lysyl-[protein] + holo-[ACP] + H(+). Its pathway is protein modification; protein lipoylation via endogenous pathway; protein N(6)-(lipoyl)lysine from octanoyl-[acyl-carrier-protein]: step 1/2. Functionally, catalyzes the transfer of endogenously produced octanoic acid from octanoyl-acyl-carrier-protein onto the lipoyl domains of lipoate-dependent enzymes. Lipoyl-ACP can also act as a substrate although octanoyl-ACP is likely to be the physiological substrate. The chain is Octanoyltransferase from Anaplasma phagocytophilum (strain HZ).